Consider the following 132-residue polypeptide: Cliotide T2 (132 aa).

The first 28 residues, 1-28 (MAYVRLTSLAVLFFLAASVMLNVKKTEG), serve as a signal peptide directing secretion. The cyclopeptide (Gly-Asn) cross-link spans 29-58 (GEFLKCGESCVQGECYTPGCSCDWPICKKN). 3 cysteine pairs are disulfide-bonded: C34–C48, C38–C50, and C43–C55. A propeptide spans 59–132 (HIIATNAKTV…NLKMPMTIIN (74 aa)) (removed in mature form).

In terms of processing, this is a cyclic peptide. Expressed in flower, stem, shoot and pod but not in root, leaf, seed and nodule (at protein level).

Its function is as follows. Probably participates in a plant defense mechanism. Not active against Gram-negative bacteria E.coli ATCC 700926, K.pneumoniae ATTC 13883 and P.aeruginosa ATCC 39018 at concentration up to 100 uM. Has cytotoxic but no hemolytic activity. The polypeptide is Cliotide T2 (Clitoria ternatea (Butterfly pea)).